The following is a 586-amino-acid chain: Dual specificity tyrosine-phosphorylation-regulated kinase 3 (586 aa).

The span at 1–13 (MGGAARERGRKDA) shows a compositional bias: basic and acidic residues. Positions 1–187 (MGGAARERGR…QGVIGGPNNG (187 aa)) are disordered. Positions 208–521 (YEVLKIIGKG…PAQALRHPWI (314 aa)) constitute a Protein kinase domain. Residues 214–222 (IGKGSFGQV), Lys237, and 287–290 (FELL) each bind ATP. Asp334 functions as the Proton acceptor in the catalytic mechanism. Tyr368 carries the post-translational modification Phosphotyrosine. A Nuclear localization signal motif is present at residues 467–480 (RSRRGKKRGPPGSK).

It belongs to the protein kinase superfamily. CMGC Ser/Thr protein kinase family. MNB/DYRK subfamily. Interacts with SIRT1. Mg(2+) serves as cofactor. Post-translationally, protein kinase activity is activated following autophosphorylation at Tyr-368. Ubiquitinated at anaphase by the anaphase-promoting complex (APC/C), leading to its degradation by the proteasome. As to expression, expressed predominantly in testis. Expressed in late pachytene spermatocytes.

It is found in the nucleus. The protein localises to the cytoplasm. The protein resides in the nucleus speckle. Its subcellular location is the cytoplasmic granule. It localises to the cytoskeleton. It is found in the microtubule organizing center. The protein localises to the centrosome. It catalyses the reaction L-seryl-[protein] + ATP = O-phospho-L-seryl-[protein] + ADP + H(+). It carries out the reaction L-threonyl-[protein] + ATP = O-phospho-L-threonyl-[protein] + ADP + H(+). The catalysed reaction is L-tyrosyl-[protein] + ATP = O-phospho-L-tyrosyl-[protein] + ADP + H(+). Its activity is regulated as follows. Protein kinase activity is activated following autophosphorylation at Tyr-368. Dual-specificity protein kinase that promotes disassembly of several types of membraneless organelles during mitosis, such as stress granules, nuclear speckles and pericentriolar material. Dual-specificity tyrosine-regulated kinases (DYRKs) autophosphorylate a critical tyrosine residue in their activation loop and phosphorylate their substrate on serine and threonine residues. Acts as a central dissolvase of membraneless organelles during the G2-to-M transition, after the nuclear-envelope breakdown: acts by mediating phosphorylation of multiple serine and threonine residues in unstructured domains of proteins, such as SRRM1 and PCM1. Does not mediate disassembly of all membraneless organelles: disassembly of P-body and nucleolus is not regulated by DYRK3. Dissolution of membraneless organelles at the onset of mitosis is also required to release mitotic regulators, such as ZNF207, from liquid-unmixed organelles where they are sequestered and keep them dissolved during mitosis. Regulates mTORC1 by mediating the dissolution of stress granules: during stressful conditions, DYRK3 partitions from the cytosol to the stress granule, together with mTORC1 components, which prevents mTORC1 signaling. When stress signals are gone, the kinase activity of DYRK3 is required for the dissolution of stress granule and mTORC1 relocation to the cytosol: acts by mediating the phosphorylation of the mTORC1 inhibitor AKT1S1, allowing full reactivation of mTORC1 signaling. Also acts as a negative regulator of EPO-dependent erythropoiesis: may place an upper limit on red cell production during stress erythropoiesis. Inhibits cell death due to cytokine withdrawal in hematopoietic progenitor cells. Promotes cell survival upon genotoxic stress through phosphorylation of SIRT1: this in turn inhibits p53/TP53 activity and apoptosis. The sequence is that of Dual specificity tyrosine-phosphorylation-regulated kinase 3 from Rattus norvegicus (Rat).